Reading from the N-terminus, the 169-residue chain is Photosystem I assembly protein Ycf3 (169 aa).

TPR repeat units lie at residues 35–68, 72–105, and 120–153; these read AFSY…EIDP, SYIL…NPAL, and GEQA…APSN.

It belongs to the Ycf3 family.

The protein resides in the plastid. The protein localises to the chloroplast thylakoid membrane. In terms of biological role, essential for the assembly of the photosystem I (PSI) complex. May act as a chaperone-like factor to guide the assembly of the PSI subunits. In Chaetosphaeridium globosum (Charophycean green alga), this protein is Photosystem I assembly protein Ycf3.